The primary structure comprises 475 residues: Gamma-aminobutyric acid receptor subunit gamma-2 (475 aa).

The signal sequence occupies residues 1–39; sequence MSSPNIWSTGSSVYSTPVFSQKMTLWILLLLSLYPGLTR. Residues 41–275 are Extracellular-facing; it reads KSDDDYEDYA…FDLSRRMGYF (235 aa). N-linked (GlcNAc...) asparagine glycans are attached at residues Asn52 and Asn129. Cys190 and Cys204 are disulfide-bonded. Asn247 carries N-linked (GlcNAc...) asparagine glycosylation. Residues 276–296 form a helical membrane-spanning segment; the sequence is TIQTYIPCTLIVVLSWVSFWI. The Cytoplasmic portion of the chain corresponds to 297–302; it reads NKDAVP. A helical membrane pass occupies residues 303 to 322; the sequence is ARTSLGITTVLTMTTLSTIA. Residues 323–334 are Extracellular-facing; the sequence is RKSLPKVSYVTA. Residues 335-359 form a helical membrane-spanning segment; that stretch reads MDLFVSVCFIFVFSALVEYGTLHYF. The Cytoplasmic portion of the chain corresponds to 360–451; it reads VSNRKPSKDK…IHIRIAKMDS (92 aa). Ser382 carries the phosphoserine; by PKC modification. The chain crosses the membrane as a helical span at residues 452-472; that stretch reads YARIFFPTAFCLFNLVYWVSY. At 473–475 the chain is on the extracellular side; that stretch reads LYL.

The protein belongs to the ligand-gated ion channel (TC 1.A.9) family. Gamma-aminobutyric acid receptor (TC 1.A.9.5) subfamily. GABRG2 sub-subfamily. As to quaternary structure, heteropentamer, formed by a combination of alpha (GABRA1-6), beta (GABRB1-3), gamma (GABRG1-3), delta (GABRD), epsilon (GABRE), rho (GABRR1-3), pi (GABRP) and theta (GABRQ) chains, each subunit exhibiting distinct physiological and pharmacological properties. Interacts with GABARAP. Interacts with KIF21B. Identified in a complex of 720 kDa composed of LHFPL4, NLGN2, GABRA1, GABRB2, GABRG2 and GABRB3. Interacts with LHFPL4. Interacts with SHISA7; interaction leads to the regulation of GABA(A) receptor trafficking, channel deactivation kinetics and pharmacology. In terms of processing, palmitoylated by ZDHHC3/GODZ; required for the accumulation of GABA(A) receptors at the postsynaptic membrane of inhibitory GABAergic synapses. Post-translationally, glycosylated.

It is found in the postsynaptic cell membrane. The protein resides in the cell membrane. It localises to the cell projection. The protein localises to the dendrite. Its subcellular location is the cytoplasmic vesicle membrane. It catalyses the reaction chloride(in) = chloride(out). Its activity is regulated as follows. Allosterically activated by benzodiazepines. Activated by pentobarbital. Inhibited by the antagonist bicuculline. Inhibited by zinc ions. Potentiated by histamine. Functionally, gamma subunit of the heteropentameric ligand-gated chloride channel gated by gamma-aminobutyric acid (GABA), a major inhibitory neurotransmitter in the brain. GABA-gated chloride channels, also named GABA(A) receptors (GABAAR), consist of five subunits arranged around a central pore and contain GABA active binding site(s) located at the alpha and beta subunit interface(s). When activated by GABA, GABAARs selectively allow the flow of chloride anions across the cell membrane down their electrochemical gradient. Gamma-2/GABRG2-containing GABAARs are found at both synaptic and extrasynaptic sites. Chloride influx into the postsynaptic neuron following GABAAR opening decreases the neuron ability to generate a new action potential, thereby reducing nerve transmission. GABAARs containing alpha-1 and beta-2 or -3 subunits exhibit synaptogenic activity; the gamma-2 subunit being necessary but not sufficient to induce rapid synaptic contacts formation. Extrasynaptic gamma-2-containing receptors contribute to the tonic GABAergic inhibition. GABAARs function also as histamine receptor where histamine binds at the interface of two neighboring beta subunits and potentiates GABA response in a gamma-2 subunit-controlled manner. This Bos taurus (Bovine) protein is Gamma-aminobutyric acid receptor subunit gamma-2 (GABRG2).